The following is a 145-amino-acid chain: NADH-quinone oxidoreductase subunit A (145 aa).

The next 3 membrane-spanning stretches (helical) occupy residues 14–34, 66–86, and 96–116; these read FAVF…GGFL, FYLV…LYAW, and VGFI…VYLV.

Belongs to the complex I subunit 3 family. NDH-1 is composed of 13 different subunits. Subunits NuoA, H, J, K, L, M, N constitute the membrane sector of the complex.

The protein localises to the cell inner membrane. The catalysed reaction is a quinone + NADH + 5 H(+)(in) = a quinol + NAD(+) + 4 H(+)(out). Functionally, NDH-1 shuttles electrons from NADH, via FMN and iron-sulfur (Fe-S) centers, to quinones in the respiratory chain. The immediate electron acceptor for the enzyme in this species is believed to be ubiquinone. Couples the redox reaction to proton translocation (for every two electrons transferred, four hydrogen ions are translocated across the cytoplasmic membrane), and thus conserves the redox energy in a proton gradient. The protein is NADH-quinone oxidoreductase subunit A of Sodalis glossinidius (strain morsitans).